The following is a 457-amino-acid chain: MQKYISEARLLLALAIPVILAQIAQTAMGFVDTVMAGGYSATDMAAVAIGTSIWLPAILFGHGLLLALTPVIAQLNGSGRRERIAHQVRQGFWLAGFVSVLIMLVLWNAGYIIRSMENIDPALADKAVGYLRALLWGAPGYLFFQVARNQCEGLAKTKPGMVMGFIGLLVNIPVNYIFIYGHFGMPELGGVGCGVATAAVYWVMFLAMVSYIKRARSMRDIRNEKGTAKPDPAVMKRLIQLGLPIALALFFEVTLFAVVALLVSPLGIVDVAGHQIALNFSSLMFVLPMSLAAAVTIRVGYRLGQGSTLDAQTAARTGLMVGVCMATLTAIFTVSLREQIALLYNDNPEVVTLAAHLMLLAAVYQISDSIQVIGSGILRGYKDTRSIFYITFTAYWVLGLPSGYILALTDLVVEPMGPAGFWIGFIIGLTSAAIMMMLRMRFLQRMPSAIILQRASR.

At 1–10 (MQKYISEARL) the chain is on the cytoplasmic side. The helical transmembrane segment at 11 to 31 (LLALAIPVILAQIAQTAMGFV) threads the bilayer. Residues 32-52 (DTVMAGGYSATDMAAVAIGTS) are Periplasmic-facing. The chain crosses the membrane as a helical span at residues 53–73 (IWLPAILFGHGLLLALTPVIA). At 74-92 (QLNGSGRRERIAHQVRQGF) the chain is on the cytoplasmic side. Residues 93-113 (WLAGFVSVLIMLVLWNAGYII) form a helical membrane-spanning segment. Over 114-126 (RSMENIDPALADK) the chain is Periplasmic. The helical transmembrane segment at 127 to 147 (AVGYLRALLWGAPGYLFFQVA) threads the bilayer. The Cytoplasmic portion of the chain corresponds to 148-159 (RNQCEGLAKTKP). The chain crosses the membrane as a helical span at residues 160–180 (GMVMGFIGLLVNIPVNYIFIY). The Periplasmic portion of the chain corresponds to 181–188 (GHFGMPEL). A helical transmembrane segment spans residues 189-209 (GGVGCGVATAAVYWVMFLAMV). At 210-242 (SYIKRARSMRDIRNEKGTAKPDPAVMKRLIQLG) the chain is on the cytoplasmic side. The chain crosses the membrane as a helical span at residues 243–263 (LPIALALFFEVTLFAVVALLV). Over 264-275 (SPLGIVDVAGHQ) the chain is Periplasmic. The helical transmembrane segment at 276–296 (IALNFSSLMFVLPMSLAAAVT) threads the bilayer. The Cytoplasmic portion of the chain corresponds to 297 to 313 (IRVGYRLGQGSTLDAQT). A helical transmembrane segment spans residues 314 to 334 (AARTGLMVGVCMATLTAIFTV). Residues 335 to 349 (SLREQIALLYNDNPE) lie on the Periplasmic side of the membrane. Residues 350–370 (VVTLAAHLMLLAAVYQISDSI) traverse the membrane as a helical segment. Residues 371–386 (QVIGSGILRGYKDTRS) are Cytoplasmic-facing. Residues 387–407 (IFYITFTAYWVLGLPSGYILA) form a helical membrane-spanning segment. The Periplasmic portion of the chain corresponds to 408–417 (LTDLVVEPMG). Residues 418-438 (PAGFWIGFIIGLTSAAIMMML) traverse the membrane as a helical segment. Topologically, residues 439–457 (RMRFLQRMPSAIILQRASR) are cytoplasmic.

The protein belongs to the multi antimicrobial extrusion (MATE) (TC 2.A.66.1) family. MdtK subfamily.

It localises to the cell inner membrane. Multidrug efflux pump that functions probably as a Na(+)/drug antiporter. The protein is Multidrug resistance protein MdtK of Shigella boydii serotype 4 (strain Sb227).